A 505-amino-acid polypeptide reads, in one-letter code: L-carnitine/gamma-butyrobetaine antiporter (505 aa).

12 helical membrane passes run Ile10–Val30, Trp51–Phe71, Ile92–Ile112, Gly143–Val163, Phe195–Val215, Leu231–Leu251, Ser263–Met283, Trp316–Ala336, Leu347–Gly367, Leu403–Ile423, Leu446–Leu466, and Ala475–Ile495.

The protein belongs to the BCCT transporter (TC 2.A.15) family. CaiT subfamily. In terms of assembly, homotrimer.

It localises to the cell inner membrane. It catalyses the reaction 4-(trimethylamino)butanoate(in) + (R)-carnitine(out) = 4-(trimethylamino)butanoate(out) + (R)-carnitine(in). It functions in the pathway amine and polyamine metabolism; carnitine metabolism. Catalyzes the exchange of L-carnitine for gamma-butyrobetaine. This Salmonella agona (strain SL483) protein is L-carnitine/gamma-butyrobetaine antiporter.